We begin with the raw amino-acid sequence, 101 residues long: Small ribosomal subunit protein uS10 (101 aa).

It belongs to the universal ribosomal protein uS10 family. As to quaternary structure, part of the 30S ribosomal subunit.

Involved in the binding of tRNA to the ribosomes. The sequence is that of Small ribosomal subunit protein uS10 from Corynebacterium jeikeium (strain K411).